A 188-amino-acid polypeptide reads, in one-letter code: Pyridoxal 5'-phosphate synthase subunit PdxT (188 aa).

Residue Gly-47–Ser-49 coordinates L-glutamine. Cys-79 functions as the Nucleophile in the catalytic mechanism. L-glutamine-binding positions include Arg-105 and Ile-134–Arg-135. Catalysis depends on charge relay system residues His-170 and Glu-172.

Belongs to the glutaminase PdxT/SNO family. In the presence of PdxS, forms a dodecamer of heterodimers. Only shows activity in the heterodimer.

The enzyme catalyses aldehydo-D-ribose 5-phosphate + D-glyceraldehyde 3-phosphate + L-glutamine = pyridoxal 5'-phosphate + L-glutamate + phosphate + 3 H2O + H(+). The catalysed reaction is L-glutamine + H2O = L-glutamate + NH4(+). It functions in the pathway cofactor biosynthesis; pyridoxal 5'-phosphate biosynthesis. In terms of biological role, catalyzes the hydrolysis of glutamine to glutamate and ammonia as part of the biosynthesis of pyridoxal 5'-phosphate. The resulting ammonia molecule is channeled to the active site of PdxS. This chain is Pyridoxal 5'-phosphate synthase subunit PdxT, found in Listeria monocytogenes serotype 4b (strain F2365).